Here is a 533-residue protein sequence, read N- to C-terminus: MSLSYLSSSSQKSFESFRQEESPACNHSYQRDYETFGDSKHTSFSSFAPFENEVSLNQAVIPSPPSHLQNFQDQFDYSSVLKTPFNPLLEANSAYFLSNQISLPDSHSYASSFDASLSPPSSPLTCVSQIHTEQNFNNNDAFSLTNSQQAFSEIGYDASNWIDELDSQQQVLSFPEFDIPEIKTETCSNKDHLENFDYLSSSIPETSGPASSVLPSSSQLESFNEFMFLPSSPPGLDEINGAPSFEELNFQISQPSPAHPVDLSSPETAPNISPVSPFAQLVKLEPTSPQKPSFALDSSFSHLDVCRHTDNQKAFAKLSSPAEYVSEFEKFSSVCDHGLDISNANINNTLTQQFALSAPYESCIVTKKPEPCITVKEEEQLAPKIESADLSITPQVTEHDSKPPVRISYDHRCKTRKQSTRICRIPPETMASLYCGPEADGKYVCLYNGCNKRIARKYNVESHIQTHLSDRPYRCDLCKAGFVRHHDLKRHLRIHENGRPYVCECLKRFNRLDALNRHKQRNICVGGVDRRQH.

C2H2-type zinc fingers lie at residues 443-472 (YVCL…SDRP) and 473-500 (YRCD…NGRP). The C2H2-type 3; atypical zinc finger occupies 501–524 (YVCECLKRFNRLDALNRHKQRNIC).

The protein resides in the nucleus. Its function is as follows. Regulates the transcription of genes required for cell separation. The sequence is that of Metallothionein expression activator (ace2) from Schizosaccharomyces pombe (strain 972 / ATCC 24843) (Fission yeast).